A 504-amino-acid chain; its full sequence is Cytochrome P450 3A11 (504 aa).

Residue Cys443 participates in heme binding.

The protein belongs to the cytochrome P450 family. Heme serves as cofactor. In terms of tissue distribution, highly expressed in liver.

Its subcellular location is the endoplasmic reticulum membrane. It is found in the microsome membrane. It carries out the reaction an organic molecule + reduced [NADPH--hemoprotein reductase] + O2 = an alcohol + oxidized [NADPH--hemoprotein reductase] + H2O + H(+). In terms of biological role, catalyzes erythromycin N-demethylation, nifedipine oxidation and testosterone 6 beta-hydroxylation. The protein is Cytochrome P450 3A11 (Cyp3a11) of Mus musculus (Mouse).